The following is a 513-amino-acid chain: uncharacterized protein (513 aa).

The region spanning 3-61 (NLKIGQKLQLEIERMGINGEGIGVISGRLVFIPYALPGEEVLVEITENARNFSRAKLVK) is the TRAM domain. Glutamine 309, tyrosine 338, aspartate 359, and aspartate 407 together coordinate S-adenosyl-L-methionine. Cysteine 434 functions as the Nucleophile in the catalytic mechanism.

It belongs to the class I-like SAM-binding methyltransferase superfamily. RNA M5U methyltransferase family.

This is an uncharacterized protein from Lactococcus lactis subsp. lactis (strain IL1403) (Streptococcus lactis).